We begin with the raw amino-acid sequence, 363 residues long: Trans-2,3-enoyl-CoA reductase-like (363 aa).

A Phosphoserine modification is found at S37. 4 helical membrane passes run 143–163 (WTTVFLAEYTGPLLIYLLFYL), 216–235 (NLLKSCAFYWGFTSWIAYYI), 250–270 (VAISAINFLICEAGNHFINVV), and 311–331 (ISFTIMTQTLPVGIFTLLMSI).

Belongs to the steroid 5-alpha reductase family.

The protein resides in the membrane. The protein localises to the endoplasmic reticulum. In Bos taurus (Bovine), this protein is Trans-2,3-enoyl-CoA reductase-like (TECRL).